The primary structure comprises 244 residues: MTAGAAPRILKHQVVRAELDRMLDGMRIGDPFPAEREIAEQFEVARETVRQALRELLIDGRVERRGRTTVVARPKIRQPLGMGSYTEAAKAQGLSAGRILVAWSDLTADEVLAGVLGVDVGAPVLQLERVLTTDGVRVGLETTKLPAQRYPGLRETFDHEASLYAEIRSRGIAFTRTVDTIDTALPDAREAALLGADARTPMFLLNRVSYDQDDVAIEQRRSLYRGDRMTFTAVMHAKNSAIVS.

Residues 8–74 (RILKHQVVRA…RGRTTVVARP (67 aa)) enclose the HTH gntR-type domain. The segment at residues 35 to 54 (EREIAEQFEVARETVRQALR) is a DNA-binding region (H-T-H motif).

It is found in the cytoplasm. Its function is as follows. Represses the phnDCE operon, involved in the uptake of phosphate, under conditions of phosphate availability in the cell. This Mycolicibacterium smegmatis (strain ATCC 700084 / mc(2)155) (Mycobacterium smegmatis) protein is HTH-type transcriptional repressor PhnF (phnF).